A 158-amino-acid polypeptide reads, in one-letter code: Ribosome maturation factor RimP (158 aa).

The protein belongs to the RimP family.

It is found in the cytoplasm. In terms of biological role, required for maturation of 30S ribosomal subunits. The polypeptide is Ribosome maturation factor RimP (Leuconostoc citreum (strain KM20)).